We begin with the raw amino-acid sequence, 572 residues long: Mitochondrial chaperone TCM62 (572 aa).

The transit peptide at 1–16 (MLRNCLRKLGNHQTKC) directs the protein to the mitochondrion. Over 17–471 (SVKTLHTPIY…KANEPNFMTK (455 aa)) the chain is Mitochondrial matrix. Residues 472-488 (VGINAVLSAVILPSEVA) traverse the membrane as a helical segment. Topologically, residues 489–572 (FKNAYGYNYY…VYKKPERHKA (84 aa)) are mitochondrial intermembrane.

This sequence belongs to the chaperonin (HSP60) family. Forms a high molecular mass protein complex of approximately 850 kDa.

The protein localises to the mitochondrion inner membrane. In terms of biological role, chaperone. Required for the assembly of succinate dehydrogenase subunits. Ensures mitochondrial gene expression at elevated temperatures and prevents heat-aggregation of the ribosomal subunit VAR1. This is Mitochondrial chaperone TCM62 (TCM62) from Saccharomyces cerevisiae (strain YJM789) (Baker's yeast).